Here is a 300-residue protein sequence, read N- to C-terminus: Urease accessory protein UreD (300 aa).

This sequence belongs to the UreD family. UreD, UreF and UreG form a complex that acts as a GTP-hydrolysis-dependent molecular chaperone, activating the urease apoprotein by helping to assemble the nickel containing metallocenter of UreC. The UreE protein probably delivers the nickel.

The protein resides in the cytoplasm. Its function is as follows. Required for maturation of urease via the functional incorporation of the urease nickel metallocenter. This is Urease accessory protein UreD from Prochlorococcus marinus (strain AS9601).